Consider the following 178-residue polypeptide: Caveolin-1 (178 aa).

S2 bears the N-acetylserine mark. A Phosphoserine modification is found at S2. A required for homooligomerization region spans residues 2-94; that stretch reads SGGKYVDSEG…WKASFTTFTV (93 aa). Residues 2 to 104 are Cytoplasmic-facing; sequence SGGKYVDSEG…TKYWFYRLLS (103 aa). An N6-acetyllysine; alternate modification is found at K5. A Glycyl lysine isopeptide (Lys-Gly) (interchain with G-Cter in ubiquitin); alternate cross-link involves residue K5. Residue Y6 is modified to Phosphotyrosine. Residue S9 is modified to Phosphoserine. The residue at position 14 (Y14) is a Phosphotyrosine; by ABL1. Position 25 is a phosphotyrosine (Y25). Residues K26, K30, K39, K47, and K57 each participate in a glycyl lysine isopeptide (Lys-Gly) (interchain with G-Cter in ubiquitin) cross-link. The interval 82–94 is interaction with CAVIN3; that stretch reads DGIWKASFTTFTV. Positions 105-125 form an intramembrane region, helical; sequence GIFGIPMALIWGVYFAILSFL. Residues 126–178 lie on the Cytoplasmic side of the membrane; that stretch reads HIWAVVPCIKSFLIEIQCISRVYSIYVHTFCDPLFEAIGKIFSNIRISTQKEI. The interval 131–142 is interacts with SPRY1, SPRY2, SPRY3 and SPRY4; it reads VPCIKSFLIEIQ. S-palmitoyl cysteine attachment occurs at residues C133, C143, and C156. The interacts with SPRY1, SPRY2, and SPRY4 stretch occupies residues 149–160; sequence SIYVHTFCDPLF. Residues 167 to 178 form an interacts with SPRY1, SPRY2, SPRY3 and SPRY4 region; it reads FSNIRISTQKEI.

The protein belongs to the caveolin family. As to quaternary structure, homooligomer. Interacts with GLIPR2. Interacts with NOSTRIN. Interacts with SNAP25 and STX1A. Interacts (via the N-terminus) with DPP4; the interaction is direct. Interacts with CTNNB1, CDH1 and JUP. Interacts with PACSIN2; this interaction induces membrane tubulation. Interacts with SLC7A9. Interacts with BMX and BTK. Interacts with TGFBR1. Interacts with CAVIN3 (via leucine-zipper domain) in a cholesterol-sensitive manner. Interacts with CAVIN1. Interacts with EHD2 in a cholesterol-dependent manner. Forms a ternary complex with UBXN6 and VCP; mediates CAV1 targeting to lysosomes for degradation. Interacts with ABCG1; this interaction regulates ABCG1-mediated cholesterol efflux. Interacts with NEU3; this interaction enhances NEU3 sialidase activity within caveola. Interacts (via C-terminus) with SPRY1, SPRY2 (via C-terminus), SPRY3, and SPRY4. Interacts with IGFBP5; this interaction allows trafficking of IGFBP5 from the plasma membrane to the nucleus. In terms of processing, phosphorylated at Tyr-14 by ABL1 in response to oxidative stress. Ubiquitinated. Undergo monoubiquitination and multi- and/or polyubiquitination. Monoubiquitination of N-terminal lysines promotes integration in a ternary complex with UBXN6 and VCP which promotes oligomeric CAV1 targeting to lysosomes for degradation. Ubiquitinated by ZNRF1; leading to degradation and modulation of the TLR4-mediated immune response.

It localises to the golgi apparatus membrane. The protein localises to the cell membrane. The protein resides in the membrane. Its subcellular location is the caveola. It is found in the membrane raft. Functionally, may act as a scaffolding protein within caveolar membranes. Forms a stable heterooligomeric complex with CAV2 that targets to lipid rafts and drives caveolae formation. Mediates the recruitment of CAVIN proteins (CAVIN1/2/3/4) to the caveolae. Interacts directly with G-protein alpha subunits and can functionally regulate their activity. Involved in the costimulatory signal essential for T-cell receptor (TCR)-mediated T-cell activation. Its binding to DPP4 induces T-cell proliferation and NF-kappa-B activation in a T-cell receptor/CD3-dependent manner. Recruits CTNNB1 to caveolar membranes and may regulate CTNNB1-mediated signaling through the Wnt pathway. Negatively regulates TGFB1-mediated activation of SMAD2/3 by mediating the internalization of TGFBR1 from membrane rafts leading to its subsequent degradation. Binds 20(S)-hydroxycholesterol (20(S)-OHC). This Echinops telfairi (Lesser hedgehog tenrec) protein is Caveolin-1 (CAV1).